A 109-amino-acid polypeptide reads, in one-letter code: Nucleoid-associated protein HI_0442 (109 aa).

Belongs to the YbaB/EbfC family. Homodimer.

The protein resides in the cytoplasm. Its subcellular location is the nucleoid. Binds to DNA and alters its conformation. May be involved in regulation of gene expression, nucleoid organization and DNA protection. This is Nucleoid-associated protein HI_0442 from Haemophilus influenzae (strain ATCC 51907 / DSM 11121 / KW20 / Rd).